The following is a 930-amino-acid chain: Bifunctional uridylyltransferase/uridylyl-removing enzyme (930 aa).

The tract at residues 1–387 (MAPASEAGPA…IMGLFRRKKR (387 aa)) is uridylyltransferase. A uridylyl-removing region spans residues 388-741 (LKPEYSLVNG…LDPDPDRDAT (354 aa)). One can recognise an HD domain in the interval 504-626 (VDEHTIQCIS…VRSKKRLDLL (123 aa)). 2 consecutive ACT domains span residues 742–818 (RACF…VVAR) and 852–927 (IIEV…GAER).

This sequence belongs to the GlnD family. Requires Mg(2+) as cofactor.

It carries out the reaction [protein-PII]-L-tyrosine + UTP = [protein-PII]-uridylyl-L-tyrosine + diphosphate. It catalyses the reaction [protein-PII]-uridylyl-L-tyrosine + H2O = [protein-PII]-L-tyrosine + UMP + H(+). Its activity is regulated as follows. Uridylyltransferase (UTase) activity is inhibited by glutamine, while glutamine activates uridylyl-removing (UR) activity. Functionally, modifies, by uridylylation and deuridylylation, the PII regulatory proteins (GlnB and homologs), in response to the nitrogen status of the cell that GlnD senses through the glutamine level. Under low glutamine levels, catalyzes the conversion of the PII proteins and UTP to PII-UMP and PPi, while under higher glutamine levels, GlnD hydrolyzes PII-UMP to PII and UMP (deuridylylation). Thus, controls uridylylation state and activity of the PII proteins, and plays an important role in the regulation of nitrogen fixation and metabolism. This Cereibacter sphaeroides (strain ATCC 17023 / DSM 158 / JCM 6121 / CCUG 31486 / LMG 2827 / NBRC 12203 / NCIMB 8253 / ATH 2.4.1.) (Rhodobacter sphaeroides) protein is Bifunctional uridylyltransferase/uridylyl-removing enzyme.